A 2525-amino-acid polypeptide reads, in one-letter code: Highly reducing polyketide synthase cm3B (2525 aa).

Positions 1–10 (MQSDTNNSPL) are enriched in polar residues. The segment at 1–29 (MQSDTNNSPLSWEELRSGAASSDANSSPP) is disordered. In terms of domain architecture, Ketosynthase family 3 (KS3) spans 29-450 (PEPIAIIGMS…GTNAHVVVDA (422 aa)). Active-site for beta-ketoacyl synthase activity residues include Cys202, His336, and His376. The malonyl-CoA:ACP transacylase (MAT) domain stretch occupies residues 560–895 (VFSGQGSQYA…FLECLGALHV (336 aa)). The segment at 949–1087 (HELLGTFAHD…GLVHAETQAA (139 aa)) is N-terminal hotdog fold. Residues 949–1252 (HELLGTFAHD…AKGVHTTTLP (304 aa)) form a dehydratase (DH) domain region. The region spanning 949-1257 (HELLGTFAHD…TTTLPGDTGL (309 aa)) is the PKS/mFAS DH domain. Residue His981 is the Proton acceptor; for dehydratase activity of the active site. The segment at 1107-1257 (VHEVTPQKLY…TTTLPGDTGL (151 aa)) is C-terminal hotdog fold. Asp1169 acts as the Proton donor; for dehydratase activity in catalysis. The interval 1399 to 1504 (LEVGAGTASA…KKLLKPGGKF (106 aa)) is methyltransferase (CMet) domain. The interval 1799 to 2111 (GLLESIRWKD…AGKHTGKIVL (313 aa)) is enoyl reductase (ER) domain. A Carrier domain is found at 2411-2489 (AQLLENISQL…ELAKIIAKES (79 aa)). The ketoreductase (KR) domain stretch occupies residues 2411-2489 (AQLLENISQL…ELAKIIAKES (79 aa)). O-(pantetheine 4'-phosphoryl)serine is present on Ser2449.

It functions in the pathway secondary metabolite biosynthesis. Functionally, highly reducing polyketide synthase; part of the gene cluster that mediates the biosynthesis of beauveriolides I and III, cyclodepsipeptides acting as inhibitors of the acyl-CoA:cholesterol acyltransferase. The HR-PKS cm3B initiates the biosynthesis of beauveriolides by iteratively catalyzing the formation of the linear polyketide chain. The ATP-dependent acetyl-CoA ligase cm3D converts the polyketide carboxylic acid to a CoA thioester which id shuttled to the first T domain in the NRPS cm3A by the acetyltransferase cm3C. Cm3A contains 13 domains and assembles the polyketide chain, L-phenylalanine, L-alanine, and D-leucine (or D-allo-isoleucine) to form beauveriolide I (or beauveriolide III). The production of both beauveriolides I and III suggests the substrate adaptability of cm3B, using different amino acids as substrates. The chain is Highly reducing polyketide synthase cm3B from Cordyceps militaris (strain CM01) (Caterpillar fungus).